We begin with the raw amino-acid sequence, 85 residues long: UPF0297 protein LBA0418 (85 aa).

This sequence belongs to the UPF0297 family.

The protein is UPF0297 protein LBA0418 of Lactobacillus acidophilus (strain ATCC 700396 / NCK56 / N2 / NCFM).